The chain runs to 297 residues: tRNA pseudouridine synthase B (297 aa).

The active-site Nucleophile is the Asp39.

The protein belongs to the pseudouridine synthase TruB family. Type 1 subfamily.

It carries out the reaction uridine(55) in tRNA = pseudouridine(55) in tRNA. Responsible for synthesis of pseudouridine from uracil-55 in the psi GC loop of transfer RNAs. The sequence is that of tRNA pseudouridine synthase B from Lactobacillus acidophilus (strain ATCC 700396 / NCK56 / N2 / NCFM).